The following is a 908-amino-acid chain: DNA mismatch repair protein MutS (908 aa).

Residue 659 to 666 coordinates ATP; the sequence is GPNMAGKS.

Belongs to the DNA mismatch repair MutS family.

This protein is involved in the repair of mismatches in DNA. It is possible that it carries out the mismatch recognition step. This protein has a weak ATPase activity. This is DNA mismatch repair protein MutS from Parvibaculum lavamentivorans (strain DS-1 / DSM 13023 / NCIMB 13966).